The following is a 254-amino-acid chain: Leucyl/phenylalanyl-tRNA--protein transferase (254 aa).

The span at 1–10 (MSSQPPPLPW) shows a compositional bias: pro residues. Residues 1 to 28 (MSSQPPPLPWLDPNQDFPPTSQAWDENS) are disordered.

The protein belongs to the L/F-transferase family.

It is found in the cytoplasm. It carries out the reaction N-terminal L-lysyl-[protein] + L-leucyl-tRNA(Leu) = N-terminal L-leucyl-L-lysyl-[protein] + tRNA(Leu) + H(+). The enzyme catalyses N-terminal L-arginyl-[protein] + L-leucyl-tRNA(Leu) = N-terminal L-leucyl-L-arginyl-[protein] + tRNA(Leu) + H(+). It catalyses the reaction L-phenylalanyl-tRNA(Phe) + an N-terminal L-alpha-aminoacyl-[protein] = an N-terminal L-phenylalanyl-L-alpha-aminoacyl-[protein] + tRNA(Phe). Functions in the N-end rule pathway of protein degradation where it conjugates Leu, Phe and, less efficiently, Met from aminoacyl-tRNAs to the N-termini of proteins containing an N-terminal arginine or lysine. This is Leucyl/phenylalanyl-tRNA--protein transferase from Albidiferax ferrireducens (strain ATCC BAA-621 / DSM 15236 / T118) (Rhodoferax ferrireducens).